We begin with the raw amino-acid sequence, 364 residues long: tRNA 2-selenouridine synthase (364 aa).

A Rhodanese domain is found at 14–137 (LLADTPLIDV…LRQTAIQATW (124 aa)). The active-site S-selanylcysteine intermediate is Cys-97.

This sequence belongs to the SelU family. As to quaternary structure, monomer.

It carries out the reaction 5-methylaminomethyl-2-thiouridine(34) in tRNA + selenophosphate + (2E)-geranyl diphosphate + H2O + H(+) = 5-methylaminomethyl-2-selenouridine(34) in tRNA + (2E)-thiogeraniol + phosphate + diphosphate. It catalyses the reaction 5-methylaminomethyl-2-thiouridine(34) in tRNA + (2E)-geranyl diphosphate = 5-methylaminomethyl-S-(2E)-geranyl-thiouridine(34) in tRNA + diphosphate. The catalysed reaction is 5-methylaminomethyl-S-(2E)-geranyl-thiouridine(34) in tRNA + selenophosphate + H(+) = 5-methylaminomethyl-2-(Se-phospho)selenouridine(34) in tRNA + (2E)-thiogeraniol. The enzyme catalyses 5-methylaminomethyl-2-(Se-phospho)selenouridine(34) in tRNA + H2O = 5-methylaminomethyl-2-selenouridine(34) in tRNA + phosphate. In terms of biological role, involved in the post-transcriptional modification of the uridine at the wobble position (U34) of tRNA(Lys), tRNA(Glu) and tRNA(Gln). Catalyzes the conversion of 2-thiouridine (S2U-RNA) to 2-selenouridine (Se2U-RNA). Acts in a two-step process involving geranylation of 2-thiouridine (S2U) to S-geranyl-2-thiouridine (geS2U) and subsequent selenation of the latter derivative to 2-selenouridine (Se2U) in the tRNA chain. The protein is tRNA 2-selenouridine synthase of Salmonella typhi.